We begin with the raw amino-acid sequence, 858 residues long: Volume-regulated anion channel subunit LRRC8D (858 aa).

Topologically, residues 1 to 22 (MFTLAEVASLNDIQPTYRILKP) are cytoplasmic. Residues 23–48 (WWDVFMDYLAVVMLMVAIFAGTMQLT) traverse the membrane as a helical segment. Over 49–163 (KDQVVCLPVL…YHLALPWYSK (115 aa)) the chain is Extracellular. A disulfide bridge links Cys-54 with Cys-354. Residues 164 to 182 (YFPYLALIHTIILMVSSNF) traverse the membrane as a helical segment. Over 183 to 308 (WFKYPKTCSK…EDSDLIYKLY (126 aa)) the chain is Cytoplasmic. Residues 221-251 (SEENKQRITGAQTLPKHVSTSSDEGSPSAST) are disordered. The span at 227–251 (RITGAQTLPKHVSTSSDEGSPSAST) shows a compositional bias: polar residues. Phosphoserine is present on residues Ser-241, Ser-242, and Ser-246. Residues 309-328 (VVQTVIKTAKFIFILCYTAN) traverse the membrane as a helical segment. Topologically, residues 329–360 (FVNAISFEHVCKPKVEHLIGYEVFECTHNMAY) are extracellular. The helical transmembrane segment at 361–386 (MLKKLLISYISIICVYGFICLYTLFW) threads the bilayer. Residues 387–858 (LFRIPLKEYS…DINIPFANGI (472 aa)) lie on the Cytoplasmic side of the membrane. LRR repeat units lie at residues 514–534 (NLQELHLCHCPAKVEQTAFSF), 538–559 (HLRCLHVKFTDVAEIPAWVYLL), 561–582 (NLRELYLIGNLNSENNKMIGLE), 589–609 (HLKILHVKSNLTKVPSNITDV), 612–632 (HLTKLVIHNDGTKLLVLNSLK), 636–657 (NVAELELQNCELERIPHAIFSL), 659–680 (NLQELDLKSNNIRTIEEIISFQ), 684–705 (RLTCLKLWHNKIVTIPPSITHV), 707–728 (NLESLYFSNNKLESLPVAVFSL), 730–751 (KLRCLDVSYNNISMIPIEIGLL), 753–774 (NLQHLHITGNKVDILPKQLFKC), 776–797 (KLRTLNLGQNCITSLPEKVGQL), and 799–820 (QLTQLELKGNCLDRLPAQLGQC).

Belongs to the LRRC8 family. In terms of assembly, heterohexamer; oligomerizes with other LRRC8 proteins (LRRC8A, LRRC8B, LRRC8C and/or LRRC8E) to form a heterohexamer. In vivo, the subunit composition may depend primarily on expression levels, and heterooligomeric channels containing various proportions of the different LRRC8 proteins may coexist.

Its subcellular location is the cell membrane. The protein resides in the endoplasmic reticulum membrane. It catalyses the reaction chloride(in) = chloride(out). It carries out the reaction iodide(out) = iodide(in). The catalysed reaction is taurine(out) = taurine(in). In terms of biological role, non-essential component of the volume-regulated anion channel (VRAC, also named VSOAC channel), an anion channel required to maintain a constant cell volume in response to extracellular or intracellular osmotic changes. The VRAC channel conducts iodide better than chloride and can also conduct organic osmolytes like taurine. Plays a redundant role in the efflux of amino acids, such as aspartate, in response to osmotic stress. LRRC8A and LRRC8D are required for the uptake of the drug cisplatin. Channel activity requires LRRC8A plus at least one other family member (LRRC8B, LRRC8C, LRRC8D or LRRC8E); channel characteristics depend on the precise subunit composition. Also acts as a regulator of glucose-sensing in pancreatic beta cells: VRAC currents, generated in response to hypotonicity- or glucose-induced beta cell swelling, depolarize cells, thereby causing electrical excitation, leading to increase glucose sensitivity and insulin secretion. VRAC channels containing LRRC8D inhibit transport of immunoreactive cyclic dinucleotide GMP-AMP (2'-3'-cGAMP), an immune messenger produced in response to DNA virus in the cytosol. Mediates the import of the antibiotic blasticidin-S into the cell. This chain is Volume-regulated anion channel subunit LRRC8D, found in Homo sapiens (Human).